The chain runs to 198 residues: Synaptobrevin homolog YKT6-B (198 aa).

The region spanning 8 to 127 (VLYKGENKVH…IQYNALDSYL (120 aa)) is the Longin domain. Positions 138 to 198 (PMSKVQAELD…RKQNSCCDIM (61 aa)) constitute a v-SNARE coiled-coil homology domain. C194 carries the S-palmitoyl cysteine lipid modification. C195 is subject to Cysteine methyl ester. The S-farnesyl cysteine moiety is linked to residue C195. The propeptide at 196 to 198 (DIM) is removed in mature form.

Belongs to the synaptobrevin family. Post-translationally, palmitoylated; catalyzes its own palmitoylation. Palmitoylation is required for Golgi targeting. Farnesylation is required for Golgi targeting.

It localises to the cytoplasm. Its subcellular location is the cytosol. It is found in the cytoplasmic vesicle membrane. The protein localises to the golgi apparatus membrane. Functionally, vesicular soluble NSF attachment protein receptor (v-SNARE) mediating vesicle docking and fusion to a specific acceptor cellular compartment. Functions in endoplasmic reticulum to Golgi transport; as part of a SNARE complex composed of GOSR1, GOSR2 and STX5. Functions in early/recycling endosome to TGN transport; as part of a SNARE complex composed of BET1L, GOSR1 and STX5. Has a S-palmitoyl transferase activity. The protein is Synaptobrevin homolog YKT6-B (ykt6-b) of Xenopus laevis (African clawed frog).